The sequence spans 379 residues: Cytochrome b (379 aa).

4 helical membrane passes run Phe-33 to Met-53, Trp-77 to Ile-98, Trp-113 to Leu-133, and Phe-178 to Leu-198. The heme b site is built by His-83 and His-97. His-182 and His-196 together coordinate heme b. His-201 is an a ubiquinone binding site. 4 consecutive transmembrane segments (helical) span residues Tyr-226–Tyr-246, Leu-288–His-308, Ile-320–Gly-340, and Tyr-347–Pro-367.

The protein belongs to the cytochrome b family. The cytochrome bc1 complex contains 3 respiratory subunits (MT-CYB, CYC1 and UQCRFS1), 2 core proteins (UQCRC1 and UQCRC2) and probably 6 low-molecular weight proteins. Heme b serves as cofactor.

It is found in the mitochondrion inner membrane. Its function is as follows. Component of the ubiquinol-cytochrome c reductase complex (complex III or cytochrome b-c1 complex) that is part of the mitochondrial respiratory chain. The b-c1 complex mediates electron transfer from ubiquinol to cytochrome c. Contributes to the generation of a proton gradient across the mitochondrial membrane that is then used for ATP synthesis. The sequence is that of Cytochrome b (mt-cyb) from Anguilla mossambica (African longfin eel).